Consider the following 141-residue polypeptide: Nucleoside diphosphate kinase (141 aa).

K11, F59, R87, T93, R104, and N114 together coordinate ATP. H117 functions as the Pros-phosphohistidine intermediate in the catalytic mechanism.

It belongs to the NDK family. In terms of assembly, homotetramer. Requires Mg(2+) as cofactor.

The protein localises to the cytoplasm. It catalyses the reaction a 2'-deoxyribonucleoside 5'-diphosphate + ATP = a 2'-deoxyribonucleoside 5'-triphosphate + ADP. It carries out the reaction a ribonucleoside 5'-diphosphate + ATP = a ribonucleoside 5'-triphosphate + ADP. In terms of biological role, major role in the synthesis of nucleoside triphosphates other than ATP. The ATP gamma phosphate is transferred to the NDP beta phosphate via a ping-pong mechanism, using a phosphorylated active-site intermediate. In Cupriavidus pinatubonensis (strain JMP 134 / LMG 1197) (Cupriavidus necator (strain JMP 134)), this protein is Nucleoside diphosphate kinase.